The chain runs to 229 residues: Growth factor receptor-bound protein 2-A (229 aa).

In terms of domain architecture, SH3 1 spans 1 to 58 (MEAIAKYDFKATADDELSFKRGDVLKVLNEECDQNWYKAELNGKDGFIPKNYIEMKAH). One can recognise an SH2 domain in the interval 60–152 (WFFGKIPRAK…NQQIFLRDIE (93 aa)). An SH3 2 domain is found at 168–227 (QQPTYVQALFDFDPQEDGELGFRRGDFIQVVDNSDPNWWKGTCLSQTGMFPRNYVTPVNR).

Belongs to the GRB2/sem-5/DRK family.

The protein localises to the nucleus. Its subcellular location is the cytoplasm. It is found in the endosome. It localises to the golgi apparatus. Adapter protein that provides a critical link between cell surface growth factor receptors and the Ras signaling pathway. Promotes meiotic reinitiation during oocyte maturation. The protein is Growth factor receptor-bound protein 2-A (grb2-a) of Xenopus laevis (African clawed frog).